Here is a 216-residue protein sequence, read N- to C-terminus: Somatotropin (216 aa).

The signal sequence occupies residues Met1–Ala26. His45 is a binding site for Zn(2+). Cys78 and Cys189 are disulfide-bonded. Ser131 is modified (phosphoserine). Glu198 lines the Zn(2+) pocket. An intrachain disulfide couples Cys206 to Cys214.

This sequence belongs to the somatotropin/prolactin family.

It localises to the secreted. Its function is as follows. Plays an important role in growth control. Its major role in stimulating body growth is to stimulate the liver and other tissues to secrete IGF1. It stimulates both the differentiation and proliferation of myoblasts. It also stimulates amino acid uptake and protein synthesis in muscle and other tissues. The chain is Somatotropin (GH1) from Canis lupus familiaris (Dog).